We begin with the raw amino-acid sequence, 238 residues long: Probable 2-phosphosulfolactate phosphatase (238 aa).

It belongs to the ComB family. The cofactor is Mg(2+).

The enzyme catalyses (2R)-O-phospho-3-sulfolactate + H2O = (2R)-3-sulfolactate + phosphate. This chain is Probable 2-phosphosulfolactate phosphatase, found in Clostridium botulinum (strain Eklund 17B / Type B).